We begin with the raw amino-acid sequence, 393 residues long: Staphopain B (393 aa).

The first 36 residues, 1–36, serve as a signal peptide directing secretion; that stretch reads MNSSCKTRVFNIISIIMVSMLILSLGAFANNNKAKA. A propeptide spanning residues 37–219 is cleaved from the precursor; that stretch reads DSHSKQLEIN…KVEENEAIQE (183 aa). Catalysis depends on residues cysteine 243, histidine 340, and asparagine 360.

Belongs to the peptidase C47 family. In the cytoplasm, prematurely activated/folded SspB forms a stable non-covalent complex with SspC. In terms of processing, proteolytically cleaved by staphylococcal serine protease (SspA).

It is found in the secreted. With respect to regulation, prematurely activated/folded staphopain B is inhibited by staphostatin B (SspC), which is probably required to protect staphylococcal cytoplasmic proteins from degradation by SspB. In terms of biological role, cysteine protease that plays an important role in the inhibition of host innate immune response. Degrades host elastin, fibrogen, fibronectin and kininogen. Blocks phagocytosis of opsonised S.aureus by neutrophils and monocytes by inducing their death in a proteolytic activity-dependent manner. Decreases surface expression of the 'don't eat me' signal CD31 on neutrophils. Cleaves host galectin-3/LGALS3, thereby inhibiting the neutrophil-activating ability of the lectin. The protein is Staphopain B (sspB) of Staphylococcus aureus (strain MRSA252).